Consider the following 382-residue polypeptide: Osmoprotectant import ATP-binding protein OsmV (382 aa).

Residues 2-241 (IKLENLTKQF…PANEFVGSFV (240 aa)) enclose the ABC transporter domain. An ATP-binding site is contributed by 39–46 (GPSGCGKT). CBS domains lie at 258–320 (VTDQ…THPF) and 322–373 (ITGK…GRTR).

Belongs to the ABC transporter superfamily. As to quaternary structure, the complex is composed of two ATP-binding proteins (OsmV), two transmembrane proteins (OsmW and OsmY) and a solute-binding protein (OsmX).

The protein resides in the cell inner membrane. In terms of biological role, part of the OsmU ABC transporter complex, which is involved in the uptake of osmoprotectants such as choline-O-sulfate and glycine betaine. Probably responsible for energy coupling to the transport system. This Salmonella typhimurium (strain LT2 / SGSC1412 / ATCC 700720) protein is Osmoprotectant import ATP-binding protein OsmV (osmV).